A 391-amino-acid chain; its full sequence is Phosphoglycerate kinase (391 aa).

Substrate contacts are provided by residues 21-23 (DLN), arginine 36, 59-62 (HLGR), arginine 113, and arginine 146. ATP contacts are provided by residues lysine 197, glutamate 319, and 345–348 (GGDT).

The protein belongs to the phosphoglycerate kinase family. Monomer.

Its subcellular location is the cytoplasm. It carries out the reaction (2R)-3-phosphoglycerate + ATP = (2R)-3-phospho-glyceroyl phosphate + ADP. The protein operates within carbohydrate degradation; glycolysis; pyruvate from D-glyceraldehyde 3-phosphate: step 2/5. This Stenotrophomonas maltophilia (strain R551-3) protein is Phosphoglycerate kinase.